The following is a 227-amino-acid chain: Small ribosomal subunit protein uS3 (227 aa).

The 70-residue stretch at 39 to 108 (IRKFIEERYK…EVIVNVDEVK (70 aa)) folds into the KH type-2 domain.

The protein belongs to the universal ribosomal protein uS3 family. Part of the 30S ribosomal subunit. Forms a tight complex with proteins S10 and S14.

Functionally, binds the lower part of the 30S subunit head. Binds mRNA in the 70S ribosome, positioning it for translation. The sequence is that of Small ribosomal subunit protein uS3 from Sulfurihydrogenibium sp. (strain YO3AOP1).